The following is a 153-amino-acid chain: Ribonuclease H (153 aa).

The region spanning 1–141 is the RNase H type-1 domain; it reads MKKIQLFTDG…CDDLARRAAE (141 aa). Residues Asp-9, Glu-47, Asp-69, and Asp-133 each coordinate Mg(2+).

Belongs to the RNase H family. Monomer. Mg(2+) is required as a cofactor.

Its subcellular location is the cytoplasm. The catalysed reaction is Endonucleolytic cleavage to 5'-phosphomonoester.. In terms of biological role, endonuclease that specifically degrades the RNA of RNA-DNA hybrids. This is Ribonuclease H from Psychromonas ingrahamii (strain DSM 17664 / CCUG 51855 / 37).